The sequence spans 262 residues: S-methyl-5'-thioadenosine phosphorylase (262 aa).

Phosphate-binding positions include serine 12, 54–55 (RH), and 87–88 (SA). Methionine 185 is a binding site for substrate. Threonine 186 provides a ligand contact to phosphate. 209 to 211 (DYD) is a substrate binding site.

The protein belongs to the PNP/MTAP phosphorylase family. MTAP subfamily. As to quaternary structure, homohexamer. Dimer of a homotrimer.

The enzyme catalyses S-methyl-5'-thioadenosine + phosphate = 5-(methylsulfanyl)-alpha-D-ribose 1-phosphate + adenine. Its pathway is amino-acid biosynthesis; L-methionine biosynthesis via salvage pathway; S-methyl-5-thio-alpha-D-ribose 1-phosphate from S-methyl-5'-thioadenosine (phosphorylase route): step 1/1. Its function is as follows. Catalyzes the reversible phosphorylation of S-methyl-5'-thioadenosine (MTA) to adenine and 5-methylthioribose-1-phosphate. Involved in the breakdown of MTA, a major by-product of polyamine biosynthesis. Responsible for the first step in the methionine salvage pathway after MTA has been generated from S-adenosylmethionine. Has broad substrate specificity with 6-aminopurine nucleosides as preferred substrates. The sequence is that of S-methyl-5'-thioadenosine phosphorylase from Thermofilum pendens (strain DSM 2475 / Hrk 5).